Reading from the N-terminus, the 157-residue chain is Peptide methionine sulfoxide reductase MsrA (157 aa).

Cysteine 10 is an active-site residue.

This sequence belongs to the MsrA Met sulfoxide reductase family.

The enzyme catalyses L-methionyl-[protein] + [thioredoxin]-disulfide + H2O = L-methionyl-(S)-S-oxide-[protein] + [thioredoxin]-dithiol. The catalysed reaction is [thioredoxin]-disulfide + L-methionine + H2O = L-methionine (S)-S-oxide + [thioredoxin]-dithiol. Functionally, has an important function as a repair enzyme for proteins that have been inactivated by oxidation. Catalyzes the reversible oxidation-reduction of methionine sulfoxide in proteins to methionine. The chain is Peptide methionine sulfoxide reductase MsrA from Clostridium botulinum (strain Okra / Type B1).